Here is a 332-residue protein sequence, read N- to C-terminus: DNA-directed RNA polymerase subunit alpha (332 aa).

The tract at residues 1 to 234 is alpha N-terminal domain (alpha-NTD); it reads MTVTVSQVLR…DQLSVFGDFT (234 aa). The alpha C-terminal domain (alpha-CTD) stretch occupies residues 248–332; the sequence is VDPVLLRPID…PGVSQYGMLG (85 aa).

It belongs to the RNA polymerase alpha chain family. As to quaternary structure, homodimer. The RNAP catalytic core consists of 2 alpha, 1 beta, 1 beta' and 1 omega subunit. When a sigma factor is associated with the core the holoenzyme is formed, which can initiate transcription.

It catalyses the reaction RNA(n) + a ribonucleoside 5'-triphosphate = RNA(n+1) + diphosphate. In terms of biological role, DNA-dependent RNA polymerase catalyzes the transcription of DNA into RNA using the four ribonucleoside triphosphates as substrates. The protein is DNA-directed RNA polymerase subunit alpha of Xylella fastidiosa (strain M23).